A 410-amino-acid polypeptide reads, in one-letter code: Cytochrome P450(BM-1) (410 aa).

Cysteine 356 serves as a coordination point for heme.

The protein belongs to the cytochrome P450 family. Heme serves as cofactor.

It localises to the cytoplasm. In terms of biological role, cytochromes P450 are a group of heme-thiolate monooxygenases. They oxidize a variety of structurally unrelated compounds, including steroids, fatty acids, and xenobiotics. In Priestia megaterium (strain ATCC 14581 / DSM 32 / CCUG 1817 / JCM 2506 / NBRC 15308 / NCIMB 9376 / NCTC 10342 / NRRL B-14308 / VKM B-512 / Ford 19) (Bacillus megaterium), this protein is Cytochrome P450(BM-1) (cyp106).